The primary structure comprises 367 residues: NADH-quinone oxidoreductase subunit D (367 aa).

It belongs to the complex I 49 kDa subunit family. In terms of assembly, NDH-1 is composed of 14 different subunits. Subunits NuoB, C, D, E, F, and G constitute the peripheral sector of the complex.

It localises to the cell membrane. It catalyses the reaction a quinone + NADH + 5 H(+)(in) = a quinol + NAD(+) + 4 H(+)(out). In terms of biological role, NDH-1 shuttles electrons from NADH, via FMN and iron-sulfur (Fe-S) centers, to quinones in the respiratory chain. The immediate electron acceptor for the enzyme in this species is believed to be ubiquinone. Couples the redox reaction to proton translocation (for every two electrons transferred, four hydrogen ions are translocated across the cytoplasmic membrane), and thus conserves the redox energy in a proton gradient. The protein is NADH-quinone oxidoreductase subunit D of Dehalococcoides mccartyi (strain CBDB1).